The following is a 127-amino-acid chain: NADPH-dependent 7-cyano-7-deazaguanine reductase (127 aa).

The active-site Thioimide intermediate is Cys40. The Proton donor role is filled by Asp47. Residues 62–64 (VEL) and 81–82 (HE) each bind substrate.

Belongs to the GTP cyclohydrolase I family. QueF type 1 subfamily.

The protein resides in the cytoplasm. The enzyme catalyses 7-aminomethyl-7-carbaguanine + 2 NADP(+) = 7-cyano-7-deazaguanine + 2 NADPH + 3 H(+). It participates in tRNA modification; tRNA-queuosine biosynthesis. In terms of biological role, catalyzes the NADPH-dependent reduction of 7-cyano-7-deazaguanine (preQ0) to 7-aminomethyl-7-deazaguanine (preQ1). The chain is NADPH-dependent 7-cyano-7-deazaguanine reductase from Campylobacter jejuni subsp. jejuni serotype O:2 (strain ATCC 700819 / NCTC 11168).